A 190-amino-acid chain; its full sequence is Protein GrpE (190 aa).

A disordered region spans residues 1–33 (MSEQEKDQNNAEPQVETVEEQQAAAAAEAVEPT). A compositionally biased stretch (low complexity) spans 11–32 (AEPQVETVEEQQAAAAAEAVEP).

It belongs to the GrpE family. In terms of assembly, homodimer.

It is found in the cytoplasm. Its function is as follows. Participates actively in the response to hyperosmotic and heat shock by preventing the aggregation of stress-denatured proteins, in association with DnaK and GrpE. It is the nucleotide exchange factor for DnaK and may function as a thermosensor. Unfolded proteins bind initially to DnaJ; upon interaction with the DnaJ-bound protein, DnaK hydrolyzes its bound ATP, resulting in the formation of a stable complex. GrpE releases ADP from DnaK; ATP binding to DnaK triggers the release of the substrate protein, thus completing the reaction cycle. Several rounds of ATP-dependent interactions between DnaJ, DnaK and GrpE are required for fully efficient folding. This chain is Protein GrpE, found in Alcanivorax borkumensis (strain ATCC 700651 / DSM 11573 / NCIMB 13689 / SK2).